Here is a 232-residue protein sequence, read N- to C-terminus: 6-phosphogluconolactonase (232 aa).

The protein belongs to the glucosamine/galactosamine-6-phosphate isomerase family. 6-phosphogluconolactonase subfamily.

The enzyme catalyses 6-phospho-D-glucono-1,5-lactone + H2O = 6-phospho-D-gluconate + H(+). It functions in the pathway carbohydrate degradation; pentose phosphate pathway; D-ribulose 5-phosphate from D-glucose 6-phosphate (oxidative stage): step 2/3. Functionally, hydrolysis of 6-phosphogluconolactone to 6-phosphogluconate. The protein is 6-phosphogluconolactonase (pgl) of Rhizobium meliloti (strain 1021) (Ensifer meliloti).